Reading from the N-terminus, the 208-residue chain is MFISFEGIDGSGKSTQVALFREYLERNSMEYVFIREPGGTQAGEDIREILLHNEYKLFPETELLLFMASRAQIVREVIIPALKKKKLVLADRFLDSSVAYQGYGRGLSIQMVTTLNEFSTGGVTPHLTLFIDVPVDVAVKRMRREMKHDKIEMESLDFFKRVRQGYLELAKRDPKRILVIDGTMSVEKIHEQVVKEFLLCLKKLGHGL.

Residue 7-14 participates in ATP binding; it reads GIDGSGKS.

It belongs to the thymidylate kinase family.

The catalysed reaction is dTMP + ATP = dTDP + ADP. Its function is as follows. Phosphorylation of dTMP to form dTDP in both de novo and salvage pathways of dTTP synthesis. This chain is Thymidylate kinase, found in Kosmotoga olearia (strain ATCC BAA-1733 / DSM 21960 / TBF 19.5.1).